Consider the following 171-residue polypeptide: Mitochondrial import inner membrane translocase subunit Tim17-A (171 aa).

An intrachain disulfide couples Cys-9 to Cys-78. 3 helical membrane-spanning segments follow: residues Cys-17–Phe-37, Gly-63–Asp-77, and Val-113–Leu-133. Residues Gly-144–Gln-171 are disordered. Residues Pro-151–Pro-163 are compositionally biased toward low complexity.

It belongs to the Tim17/Tim22/Tim23 family. In terms of assembly, component of the TIM23 complex at least composed of TIMM23, TIMM17 (TIMM17A or TIMM17B) and TIMM50. The complex interacts with the TIMM44 component of the PAM complex and with DNAJC15. Post-translationally, degraded by YMEL1 downstream of the integrated stress response (ISR).

It is found in the mitochondrion inner membrane. In terms of biological role, essential component of the TIM23 complex, a complex that mediates the translocation of transit peptide-containing proteins across the mitochondrial inner membrane. The chain is Mitochondrial import inner membrane translocase subunit Tim17-A (TIMM17A) from Homo sapiens (Human).